Reading from the N-terminus, the 199-residue chain is NAD(P)H quinone oxidoreductase PST3 (199 aa).

Residues 5-193 (VAIIIYSLYH…EIAFIQGKSF (189 aa)) form the Flavodoxin-like domain. FMN-binding positions include 11–15 (SLYHH) and 111–165 (IFVS…SPYG).

Belongs to the WrbA family. FMN is required as a cofactor.

Its subcellular location is the cell membrane. It carries out the reaction a quinone + NADH + H(+) = a quinol + NAD(+). It catalyses the reaction a quinone + NADPH + H(+) = a quinol + NADP(+). Flavodoxin-like protein (FLP) that plays a role in cell wall integrity, oxidative stress protection and virulence. FLPs act as NAD(P)H quinone oxidoreductases. Reduces ubiquinone (coenzyme Q), enabling it to serve as an antioxidant in the membrane. This chain is NAD(P)H quinone oxidoreductase PST3, found in Candida albicans (strain SC5314 / ATCC MYA-2876) (Yeast).